We begin with the raw amino-acid sequence, 191 residues long: Calcium-activated potassium channel subunit beta-1 (191 aa).

The Cytoplasmic segment spans residues 2–18 (GKKLVMAQRRGETRALC). A helical transmembrane segment spans residues 19–39 (LGVAMVVGAVITYYILGTTVL). Over 40–157 (PLYQKSVWTQ…YRRLYGPQSL (118 aa)) the chain is Extracellular. 2 N-linked (GlcNAc...) asparagine glycosylation sites follow: asparagine 80 and asparagine 142. A helical membrane pass occupies residues 158–178 (LFSLFWPTFLLTGGLLIIVMV). The Cytoplasmic portion of the chain corresponds to 179-191 (KINQSLSILAAQR).

Belongs to the KCNMB (TC 8.A.14.1) family. KCNMB1 subfamily. Interacts with KCNMA1 tetramer. There are probably 4 molecules of KCMNB1 per KCNMA1 tetramer. N-glycosylated.

Its subcellular location is the membrane. Regulatory subunit of the calcium activated potassium KCNMA1 (maxiK) channel. Modulates the calcium sensitivity and gating kinetics of KCNMA1, thereby contributing to KCNMA1 channel diversity. Increases the apparent Ca(2+)/voltage sensitivity of the KCNMA1 channel. It also modifies KCNMA1 channel kinetics and alters its pharmacological properties. It slows down the activation and the deactivation kinetics of the channel. Acts as a negative regulator of smooth muscle contraction by enhancing the calcium sensitivity to KCNMA1. Its presence is also a requirement for internal binding of the KCNMA1 channel opener dehydrosoyasaponin I (DHS-1) triterpene glycoside and for external binding of the agonist hormone 17-beta-estradiol (E2). Increases the binding activity of charybdotoxin (CTX) toxin to KCNMA1 peptide blocker by increasing the CTX association rate and decreasing the dissociation rate. In Bos taurus (Bovine), this protein is Calcium-activated potassium channel subunit beta-1 (KCNMB1).